The primary structure comprises 365 residues: Aminomethyltransferase (365 aa).

This sequence belongs to the GcvT family. As to quaternary structure, the glycine cleavage system is composed of four proteins: P, T, L and H.

The enzyme catalyses N(6)-[(R)-S(8)-aminomethyldihydrolipoyl]-L-lysyl-[protein] + (6S)-5,6,7,8-tetrahydrofolate = N(6)-[(R)-dihydrolipoyl]-L-lysyl-[protein] + (6R)-5,10-methylene-5,6,7,8-tetrahydrofolate + NH4(+). Functionally, the glycine cleavage system catalyzes the degradation of glycine. In Bacillus pumilus (strain SAFR-032), this protein is Aminomethyltransferase.